A 247-amino-acid polypeptide reads, in one-letter code: Adenosylcobinamide-GDP ribazoletransferase (247 aa).

Helical transmembrane passes span 34–54 (IITF…VFMV), 59–79 (CGAP…TGGF), 113–133 (GGLA…ELAL), 138–158 (ILAS…LLMY), and 194–214 (VLLP…AIFI).

This sequence belongs to the CobS family. Requires Mg(2+) as cofactor.

Its subcellular location is the cell inner membrane. It catalyses the reaction alpha-ribazole + adenosylcob(III)inamide-GDP = adenosylcob(III)alamin + GMP + H(+). The enzyme catalyses alpha-ribazole 5'-phosphate + adenosylcob(III)inamide-GDP = adenosylcob(III)alamin 5'-phosphate + GMP + H(+). It functions in the pathway cofactor biosynthesis; adenosylcobalamin biosynthesis; adenosylcobalamin from cob(II)yrinate a,c-diamide: step 7/7. Joins adenosylcobinamide-GDP and alpha-ribazole to generate adenosylcobalamin (Ado-cobalamin). Also synthesizes adenosylcobalamin 5'-phosphate from adenosylcobinamide-GDP and alpha-ribazole 5'-phosphate. The chain is Adenosylcobinamide-GDP ribazoletransferase from Escherichia coli O81 (strain ED1a).